The chain runs to 137 residues: MGWVIPEWPGAQSCPTAAQVAQPVPFMCNAPASPINDKEKDKAGGRLPSGSEPRARAFCEAGADGEQGDPSPADTIKANQGHIPAAPGETGSVICWCDQSVAPPRPAGLSVSGRQSYLVGCFRWVLTFFFSVFYLTP.

A disordered region spans residues 31-83 (PASPINDKEKDKAGGRLPSGSEPRARAFCEAGADGEQGDPSPADTIKANQGHI).

This is an uncharacterized protein from Homo sapiens (Human).